The sequence spans 331 residues: 6-phosphogluconolactonase (331 aa).

It belongs to the cycloisomerase 2 family.

The enzyme catalyses 6-phospho-D-glucono-1,5-lactone + H2O = 6-phospho-D-gluconate + H(+). It functions in the pathway carbohydrate degradation; pentose phosphate pathway; D-ribulose 5-phosphate from D-glucose 6-phosphate (oxidative stage): step 2/3. Catalyzes the hydrolysis of 6-phosphogluconolactone to 6-phosphogluconate. The polypeptide is 6-phosphogluconolactonase (Citrobacter koseri (strain ATCC BAA-895 / CDC 4225-83 / SGSC4696)).